The following is a 337-amino-acid chain: Glyceraldehyde-3-phosphate dehydrogenase 2 (337 aa).

NAD(+) contacts are provided by residues 11-12, D35, R79, and T121; that span reads RI. D-glyceraldehyde 3-phosphate is bound by residues 153–155, T184, R199, 212–213, and R235; these read SCT and TG. Residue C154 is the Nucleophile of the active site. N317 contributes to the NAD(+) binding site.

Belongs to the glyceraldehyde-3-phosphate dehydrogenase family. As to quaternary structure, homotetramer.

The protein localises to the cytoplasm. The catalysed reaction is D-glyceraldehyde 3-phosphate + phosphate + NADP(+) = (2R)-3-phospho-glyceroyl phosphate + NADPH + H(+). The enzyme catalyses D-glyceraldehyde 3-phosphate + phosphate + NAD(+) = (2R)-3-phospho-glyceroyl phosphate + NADH + H(+). Its pathway is carbohydrate degradation; glycolysis; pyruvate from D-glyceraldehyde 3-phosphate: step 1/5. In terms of biological role, involved in photosynthetic carbon assimilation. Catalyzes the NAD(P)-dependent oxidative phosphorylation of glyceraldehyde 3-phosphate (G3P) to 1,3-bisphosphoglycerate (BPG). The first reaction step involves the formation of a hemiacetal intermediate between G3P and a cysteine residue, and this hemiacetal intermediate is then oxidized to a thioester, with concomitant reduction of NAD to NADH. The reduced NADH is then exchanged with the second NAD, and the thioester is attacked by a nucleophilic inorganic phosphate to produce BPG. It can use both NADP and NAD. This is Glyceraldehyde-3-phosphate dehydrogenase 2 (gap2) from Synechocystis sp. (strain ATCC 27184 / PCC 6803 / Kazusa).